We begin with the raw amino-acid sequence, 123 residues long: Large ribosomal subunit protein bL12 (123 aa).

This sequence belongs to the bacterial ribosomal protein bL12 family. In terms of assembly, homodimer. Part of the ribosomal stalk of the 50S ribosomal subunit. Forms a multimeric L10(L12)X complex, where L10 forms an elongated spine to which 2 to 4 L12 dimers bind in a sequential fashion. Binds GTP-bound translation factors.

Its function is as follows. Forms part of the ribosomal stalk which helps the ribosome interact with GTP-bound translation factors. Is thus essential for accurate translation. The chain is Large ribosomal subunit protein bL12 from Wigglesworthia glossinidia brevipalpis.